A 325-amino-acid chain; its full sequence is Protease HtpX homolog 2 (325 aa).

The next 2 membrane-spanning stretches (helical) occupy residues 10 to 30 and 41 to 61; these read LNMALATLGITLLGFALALAV and VGLILSILIFIFFLNIIQWLF. H147 lines the Zn(2+) pocket. E148 is an active-site residue. Residue H151 coordinates Zn(2+). The next 2 membrane-spanning stretches (helical) occupy residues 159–179 and 196–216; these read LLMAVGLIPALIYYLGWWLFW and LVFLLGIIMMAVSFVFQLLVL. E223 contributes to the Zn(2+) binding site.

It belongs to the peptidase M48B family. Zn(2+) is required as a cofactor.

It localises to the cell membrane. This Saccharolobus solfataricus (strain ATCC 35092 / DSM 1617 / JCM 11322 / P2) (Sulfolobus solfataricus) protein is Protease HtpX homolog 2.